Reading from the N-terminus, the 328-residue chain is WUSCHEL-related homeobox 6 (328 aa).

Positions 1–11 (MEGSSNSPDRQ) are enriched in polar residues. A disordered region spans residues 1 to 45 (MEGSSNSPDRQSSGGSPPEERGGGGSGGGGGRSAAGEPVRSRWTP). A compositionally biased stretch (gly residues) spans 23 to 33 (GGGSGGGGGRS). The segment at residues 38–102 (PVRSRWTPKP…NRRSRSRRRQ (65 aa)) is a DNA-binding region (homeobox; WUS-type).

This sequence belongs to the WUS homeobox family.

It is found in the nucleus. Functionally, transcription factor which may be involved in developmental processes. The sequence is that of WUSCHEL-related homeobox 6 (WOX6) from Oryza sativa subsp. japonica (Rice).